The sequence spans 181 residues: Protein GrpE (181 aa).

Over residues 1-13 the composition is skewed to polar residues; the sequence is MENTQENPATQSA. The segment at 1–34 is disordered; it reads MENTQENPATQSAEDIGSAKQAAQGAAPAAEAAD. The segment covering 19–34 has biased composition (low complexity); the sequence is AKQAAQGAAPAAEAAD.

This sequence belongs to the GrpE family. As to quaternary structure, homodimer.

The protein resides in the cytoplasm. Its function is as follows. Participates actively in the response to hyperosmotic and heat shock by preventing the aggregation of stress-denatured proteins, in association with DnaK and GrpE. It is the nucleotide exchange factor for DnaK and may function as a thermosensor. Unfolded proteins bind initially to DnaJ; upon interaction with the DnaJ-bound protein, DnaK hydrolyzes its bound ATP, resulting in the formation of a stable complex. GrpE releases ADP from DnaK; ATP binding to DnaK triggers the release of the substrate protein, thus completing the reaction cycle. Several rounds of ATP-dependent interactions between DnaJ, DnaK and GrpE are required for fully efficient folding. This Burkholderia vietnamiensis (strain G4 / LMG 22486) (Burkholderia cepacia (strain R1808)) protein is Protein GrpE.